Reading from the N-terminus, the 152-residue chain is Succinate dehydrogenase [ubiquinone] cytochrome b small subunit A, mitochondrial (152 aa).

Residues 1-21 (MVTVLRLSSLCRANRASAFKS) constitute a mitochondrion transit peptide. At 22-56 (LLIRPVPCLSQDLHTVQTSQIHTSQNHHAASKAAS) the chain is on the mitochondrial matrix side. A helical transmembrane segment spans residues 57 to 78 (LHWTSERALSVALLGLLPAAYL). At 79–83 (YPGAA) the chain is on the mitochondrial intermembrane side. A helical transmembrane segment spans residues 84 to 104 (VDYSLAAALTLHGHWGLGQVV). A heme b-binding site is contributed by H95. The Mitochondrial matrix portion of the chain corresponds to 105 to 113 (TDYVHGDAK). Residue Y107 coordinates a ubiquinone. Residues 114–135 (IKLANTSLFALSALTFAGLCYF) traverse the membrane as a helical segment. Over 136 to 152 (NYHDVGICKAVAMLWSL) the chain is Mitochondrial intermembrane.

The protein belongs to the CybS family. As to quaternary structure, component of complex II composed of four subunits: the flavoprotein (FP) SDHA, iron-sulfur protein (IP) SDHB, and a cytochrome b560 composed of SDHC and SDHD.

The protein resides in the mitochondrion inner membrane. It functions in the pathway carbohydrate metabolism; tricarboxylic acid cycle. Its function is as follows. Membrane-anchoring subunit of succinate dehydrogenase (SDH) that is involved in complex II of the mitochondrial electron transport chain and is responsible for transferring electrons from succinate to ubiquinone (coenzyme Q). SDH also oxidizes malate to the non-canonical enol form of oxaloacetate, enol-oxaloacetate. Enol-oxaloacetate, which is a potent inhibitor of the succinate dehydrogenase activity, is further isomerized into keto-oxaloacetate. This chain is Succinate dehydrogenase [ubiquinone] cytochrome b small subunit A, mitochondrial (sdhd-a), found in Xenopus laevis (African clawed frog).